Here is a 213-residue protein sequence, read N- to C-terminus: Signal recognition particle sec65 subunit (213 aa).

The segment at 176 to 213 is disordered; the sequence is MAALAGMGGPAPPMPTPQASSSQRKQKSIEPEYDLDLE.

It belongs to the SRP19 family. In terms of assembly, fungal signal recognition particle consists of a 7S RNA molecule (scR1) and at least six protein subunits: srp72, srp68, srp54, sec65, srp21 and srp14.

Its subcellular location is the cytoplasm. The protein localises to the nucleus. Its function is as follows. Signal-recognition-particle assembly has a crucial role in targeting secretory proteins to the rough endoplasmic reticulum membrane. It must be involved intimately in the translocation of a wide variety of protein substrates. In Schizosaccharomyces pombe (strain 972 / ATCC 24843) (Fission yeast), this protein is Signal recognition particle sec65 subunit (sec65).